Consider the following 311-residue polypeptide: Aspartate carbamoyltransferase catalytic subunit (311 aa).

Residues Arg-55 and Thr-56 each contribute to the carbamoyl phosphate site. Lys-85 contacts L-aspartate. Carbamoyl phosphate-binding residues include Arg-106, His-135, and Gln-138. Residues Arg-168 and Arg-230 each contribute to the L-aspartate site. Carbamoyl phosphate-binding residues include Leu-268 and Pro-269.

This sequence belongs to the aspartate/ornithine carbamoyltransferase superfamily. ATCase family. Heterododecamer (2C3:3R2) of six catalytic PyrB chains organized as two trimers (C3), and six regulatory PyrI chains organized as three dimers (R2).

It catalyses the reaction carbamoyl phosphate + L-aspartate = N-carbamoyl-L-aspartate + phosphate + H(+). The protein operates within pyrimidine metabolism; UMP biosynthesis via de novo pathway; (S)-dihydroorotate from bicarbonate: step 2/3. Functionally, catalyzes the condensation of carbamoyl phosphate and aspartate to form carbamoyl aspartate and inorganic phosphate, the committed step in the de novo pyrimidine nucleotide biosynthesis pathway. This chain is Aspartate carbamoyltransferase catalytic subunit, found in Yersinia pestis.